The primary structure comprises 590 residues: MATETTKMIYTPPPLDIKMEIEIGEQPQPPVKCSNFFANHWKGLVVFLVPLLCLPVMLLNEGAEFRCMYLLLVMAIFWVTEALPLYVTSMIPIVAFPIMGIMSSDQTCRLYFKDTLVMFMGGIMVALAVEYCNLHKRLALRVIQIVGCSPRRLHFGLIMVTMFLSMWISNAACTAMMCPIIQAVLEELQAQGVCKINHEPQYQIVGGNKKNNEDEPPYPTKITLCYYLGIAYASSLGGCGTIIGTATNLTFKGIYEARFKNSTEQMDFPTFMFYSVPSMLVYTLLTFVFLQWHFMGLWRPKSKEAQEVQRGREGADVAKKVIDQRYKDLGPMSIHEIQVMILFIFMVVMYFTRKPGIFLGWADLLNSKDIRNSMPTIFVVVMCFMLPANYAFLRYCTRRGGPVPTGPTPSLITWKFIQTKVPWGLVFLLGGGFALAEGSKQSGMAKLIGNALIGLKVLPNSVLLLVVILVAVFLTAFSSNVAIANIIIPVLAEMSLAIEIHPLYLILPAGLACSMAFHLPVSTPPNALVAGYANIRTKDMAIAGIGPTIITIITLFVFCQTWGLVVYPNLNSFPEWAQIYAAAALGNKTH.

The next 11 membrane-spanning stretches (helical) occupy residues 43-63, 82-102, 115-135, 153-173, 224-244, 270-290, 329-349, 373-393, 457-477, 509-529, and 540-560; these read GLVVFLVPLLCLPVMLLNEGA, ALPLYVTSMIPIVAFPIMGIM, TLVMFMGGIMVALAVEYCNLH, LHFGLIMVTMFLSMWISNAAC, LCYYLGIAYASSLGGCGTIIG, TFMFYSVPSMLVYTLLTFVFL, LGPMSIHEIQVMILFIFMVVM, SMPTIFVVVMCFMLPANYAFL, VLPNSVLLLVVILVAVFLTAF, AGLACSMAFHLPVSTPPNALV, and MAIAGIGPTIITIITLFVFCQ.

Belongs to the SLC13A/DASS transporter (TC 2.A.47) family. NADC subfamily. In terms of tissue distribution, in adults, abundantly expressed in the fat body, basolateral region of midgut cells and oenocytes. Low level expression is seen in the halteres, procardia, restricted regions of the esophagus and hindgut, base of the legs and in a subset of cells in the third segment of the antennae.

The protein localises to the basolateral cell membrane. Cation-independent electroneutral transporter (not associated with membrane depolarization) of a variety of tricarboxylic and dicarboxylic acid-cycle intermediates. There is also small, but detectable, transport of monocarboxylics. Transport is through the epithelium of the gut and across the plasma membranes of organs involved in intermediary metabolism and storage. Affinity for substrates is citrate &gt; succinate &gt; pyruvate. Fumarate, a-ketoglutarate, and glutarate are also transported, but not lactate. Transport mechanism that is not coupled to Na(+), K(+), or Cl(-). Function is shown in Xenopus oocytes and human retinal pigment epithelial (HRPE) cell lines. This Drosophila melanogaster (Fruit fly) protein is Protein I'm not dead yet (Indy).